Consider the following 703-residue polypeptide: Methionine--tRNA ligase (703 aa).

Positions 15–25 (PYANGPVHLGH) match the 'HIGH' region motif. The Zn(2+) site is built by Cys-147, Cys-150, Cys-160, and Cys-163. Positions 345–349 (KFSKS) match the 'KMSKS' region motif. Lys-348 contacts ATP. One can recognise a tRNA-binding domain in the interval 602-703 (DFQKIDLRVA…GEGINGNSVS (102 aa)).

Belongs to the class-I aminoacyl-tRNA synthetase family. MetG type 1 subfamily. In terms of assembly, homodimer. It depends on Zn(2+) as a cofactor.

It localises to the cytoplasm. It carries out the reaction tRNA(Met) + L-methionine + ATP = L-methionyl-tRNA(Met) + AMP + diphosphate. Functionally, is required not only for elongation of protein synthesis but also for the initiation of all mRNA translation through initiator tRNA(fMet) aminoacylation. This chain is Methionine--tRNA ligase, found in Chlorobaculum tepidum (strain ATCC 49652 / DSM 12025 / NBRC 103806 / TLS) (Chlorobium tepidum).